Consider the following 458-residue polypeptide: Probable mitochondrial chaperone BCS1-B (458 aa).

The Mitochondrial intermembrane segment spans residues 1–26; sequence MENVITNNNKGLPKSILKFIPEPIQP. A helical membrane pass occupies residues 27 to 47; sequence LFENPFFSAGFGLIGVGSILA. Residues 48-458 lie on the Mitochondrial matrix side of the membrane; the sequence is MGRKGFQQAM…INNLNELIKK (411 aa). Residue 248 to 255 participates in ATP binding; it reads GPPGTGKS.

It belongs to the AAA ATPase family. BCS1 subfamily.

The protein resides in the mitochondrion inner membrane. The enzyme catalyses ATP + H2O = ADP + phosphate + H(+). Its function is as follows. Chaperone necessary for the assembly of mitochondrial respiratory chain complex III. The sequence is that of Probable mitochondrial chaperone BCS1-B (bcsl1b) from Dictyostelium discoideum (Social amoeba).